The sequence spans 564 residues: O-fucosyltransferase 6 (564 aa).

Residues 17 to 37 (LLPFICAVSGALLILFALLSI) traverse the membrane as a helical; Signal-anchor for type II membrane protein segment. 2 N-linked (GlcNAc...) asparagine glycosylation sites follow: Asn-95 and Asn-139. 277 to 279 (HLR) is a substrate binding site. N-linked (GlcNAc...) asparagine glycosylation occurs at Asn-449. Positions 501 to 512 (MDSRKFGKKEQK) are enriched in basic and acidic residues. The segment at 501–542 (MDSRKFGKKEQKEDEDAELSSSETDYEEDQTDLQDRGLYNGT) is disordered. Residues 513–532 (EDEDAELSSSETDYEEDQTD) show a composition bias toward acidic residues. An N-linked (GlcNAc...) asparagine glycan is attached at Asn-540.

Belongs to the glycosyltransferase GT106 family.

It is found in the membrane. It participates in glycan metabolism. The protein is O-fucosyltransferase 6 of Arabidopsis thaliana (Mouse-ear cress).